The following is a 228-amino-acid chain: Cytochrome b6-f complex iron-sulfur subunit 2, chloroplastic (228 aa).

A chloroplast-targeting transit peptide spans 1-49 (MASSTLSPVTQLCSSKSGLSSVSQCLLLKPMKINSHGLGKDKRMKVKCM). The helical transmembrane segment at 71–91 (LLLGALSLPTAGMLVPYATFF) threads the bilayer. Positions 115-211 (ASEWLKTHPP…ADIDDGKVVF (97 aa)) constitute a Rieske domain. C157, H159, C175, and H178 together coordinate [2Fe-2S] cluster. C162 and C177 form a disulfide bridge.

This sequence belongs to the Rieske iron-sulfur protein family. As to quaternary structure, the 4 large subunits of the cytochrome b6-f complex are cytochrome b6, subunit IV (17 kDa polypeptide, petD), cytochrome f and the Rieske protein, while the 4 small subunits are petG, petL, petM and petN. The complex functions as a dimer. The cofactor is [2Fe-2S] cluster.

It is found in the plastid. Its subcellular location is the chloroplast thylakoid membrane. It catalyses the reaction 2 oxidized [plastocyanin] + a plastoquinol + 2 H(+)(in) = 2 reduced [plastocyanin] + a plastoquinone + 4 H(+)(out). Its function is as follows. Component of the cytochrome b6-f complex, which mediates electron transfer between photosystem II (PSII) and photosystem I (PSI), cyclic electron flow around PSI, and state transitions. The protein is Cytochrome b6-f complex iron-sulfur subunit 2, chloroplastic (petC2) of Nicotiana tabacum (Common tobacco).